The sequence spans 843 residues: Probable inorganic carbon transporter subunit DabA 2 (843 aa).

Zn(2+)-binding residues include Cys352, Asp354, His536, and Cys551.

It belongs to the inorganic carbon transporter (TC 9.A.2) DabA family. Forms a complex with DabB. Zn(2+) is required as a cofactor.

It is found in the cell inner membrane. Part of an energy-coupled inorganic carbon pump. In Bradyrhizobium sp. (strain BTAi1 / ATCC BAA-1182), this protein is Probable inorganic carbon transporter subunit DabA 2.